Here is a 294-residue protein sequence, read N- to C-terminus: NAD kinase (294 aa).

Residue aspartate 74 is the Proton acceptor of the active site. NAD(+)-binding positions include 74-75 (DG), 148-149 (NE), histidine 159, arginine 176, aspartate 178, 189-194 (TAYSLS), and glutamine 249.

It belongs to the NAD kinase family. Requires a divalent metal cation as cofactor.

It is found in the cytoplasm. The enzyme catalyses NAD(+) + ATP = ADP + NADP(+) + H(+). Its function is as follows. Involved in the regulation of the intracellular balance of NAD and NADP, and is a key enzyme in the biosynthesis of NADP. Catalyzes specifically the phosphorylation on 2'-hydroxyl of the adenosine moiety of NAD to yield NADP. The protein is NAD kinase of Vibrio cholerae serotype O1 (strain ATCC 39541 / Classical Ogawa 395 / O395).